Here is a 479-residue protein sequence, read N- to C-terminus: Replication factor C large subunit (479 aa).

Glycine 43–threonine 50 is a binding site for ATP. The tract at residues glutamate 441–serine 479 is disordered. Basic and acidic residues predominate over residues glutamate 452–arginine 463.

It belongs to the activator 1 small subunits family. RfcL subfamily. In terms of assembly, heteropentamer composed of four small subunits (RfcS) and one large subunit (RfcL). Both subunits interact with PCNA.

In terms of biological role, part of the RFC clamp loader complex which loads the PCNA sliding clamp onto DNA. The complex possesses DNA-dependent ATPase activity which is further stimulated by PCNA. The protein is Replication factor C large subunit (rfcL) of Archaeoglobus fulgidus (strain ATCC 49558 / DSM 4304 / JCM 9628 / NBRC 100126 / VC-16).